Reading from the N-terminus, the 94-residue chain is Conotoxin Cal22a (94 aa).

A signal peptide spans 1–24 (MMSTKGITLFLCLLLLALATSVNG). Positions 25 to 44 (GQGTRRSRMTRALHGGRPSA) are excised as a propeptide.

Post-translationally, contains 4 disulfide bonds. In terms of tissue distribution, expressed by the venom duct.

Its subcellular location is the secreted. Functionally, probable neurotoxin with unknown target. Possibly targets ion channels. This chain is Conotoxin Cal22a, found in Californiconus californicus (California cone).